Consider the following 427-residue polypeptide: MLDFMDYIQLAFAEGTQRNCDNSYSSLTATTQNLLDFTTPERVRIHLSSLSTPNFATSYTLGTVGLIEGSISYLYSNISFDNTPSKSALIPLRKLAPGYRQVQAPIAPPSSKGQKATLLHATLHLPPPTTLNALFLRRISPTMQLSLAVSSTRGPPLSKSAPQATLLTQLTHDTGKYSNEYLFSTDNSLFGWRGLWNFGPDPRFNNNAQRLSLLSAGAEAYYSPVSSLIGMSTGLRFCTLPAATSSTPNPNTPISTFPYTLTLTLTPLTGSLSTSYSVRASPNLSFSSRFGFNVYSWESEMVAGFELWRQSRKAAIVDNDGLEWARNKARIWDIPASSQVPEPITPSEEETQESVLKVRVDQSWNVRLLWEGRVKELLVSAGVGLGPSSFSPSSYANSQATAGAQGSSGGPPTSYWRGVGVSVSYSS.

Over residues 393-414 (SSYANSQATAGAQGSSGGPPTS) the composition is skewed to low complexity. The interval 393–427 (SSYANSQATAGAQGSSGGPPTSYWRGVGVSVSYSS) is disordered.

It belongs to the MDM10 family. Component of the ER-mitochondria encounter structure (ERMES) or MDM complex, composed of mmm1, mdm10, mdm12 and mdm34. Associates with the mitochondrial outer membrane sorting assembly machinery SAM(core) complex.

It is found in the mitochondrion outer membrane. Its function is as follows. Component of the ERMES/MDM complex, which serves as a molecular tether to connect the endoplasmic reticulum and mitochondria. Components of this complex are involved in the control of mitochondrial shape and protein biogenesis and may function in phospholipid exchange. mdm10 is involved in the late assembly steps of the general translocase of the mitochondrial outer membrane (TOM complex). Functions in the tom40-specific route of the assembly of outer membrane beta-barrel proteins, including the association of tom40 with the receptor tom22 and small TOM proteins. Can associate with the SAM(core) complex as well as the mdm12-mmm1 complex, both involved in late steps of the major beta-barrel assembly pathway, that is responsible for biogenesis of all outer membrane beta-barrel proteins. May act as a switch that shuttles between both complexes and channels precursor proteins into the tom40-specific pathway. Plays a role in mitochondrial morphology and in the inheritance of mitochondria. The polypeptide is Mitochondrial distribution and morphology protein 10 (mdmB) (Emericella nidulans (strain FGSC A4 / ATCC 38163 / CBS 112.46 / NRRL 194 / M139) (Aspergillus nidulans)).